We begin with the raw amino-acid sequence, 618 residues long: Structural protein ORF618 (618 aa).

Residues 570–598 (ILEAKRQIEDRAKGLSKNLDNTVTEIMNA) are a coiled coil.

It is found in the virion. The chain is Structural protein ORF618 from Acidianus two-tailed virus (ATV).